Consider the following 526-residue polypeptide: ATP synthase subunit alpha (526 aa).

171 to 178 (GDRQTGKT) serves as a coordination point for ATP.

Belongs to the ATPase alpha/beta chains family. In terms of assembly, F-type ATPases have 2 components, CF(1) - the catalytic core - and CF(0) - the membrane proton channel. CF(1) has five subunits: alpha(3), beta(3), gamma(1), delta(1), epsilon(1). CF(0) has four main subunits: a(1), b(1), b'(1) and c(9-12).

The protein resides in the cell inner membrane. The catalysed reaction is ATP + H2O + 4 H(+)(in) = ADP + phosphate + 5 H(+)(out). Produces ATP from ADP in the presence of a proton gradient across the membrane. The alpha chain is a regulatory subunit. The protein is ATP synthase subunit alpha of Chlorobium chlorochromatii (strain CaD3).